We begin with the raw amino-acid sequence, 538 residues long: MEATMDQTQPLNEKQVPNSEGCYVWQVSDMNRLRRFLCFGSEGGTYYIEEKKLGQENAEALLRLIEDGKGCEVVQEIKTFSQEGRAAKQEPTLFALAVCSQCSDIKTKQAAFRAVPEVCRIPTHLFTFIQFKKDLKEGMKCGMWGRALRKAVSDWYNTKDALNLAMAVTKYKQRNGWSHKDLLRLSHIKPANEGLTMVAKYVSKGWKEVQEAYKEKELSPETEKVLKYLEATERVKRTKDELEIIHLIDEYRLVREHLLTIHLKSKEIWKSLLQDMPLTALLRNLGKMTADSVLAPASSEVSSVCERLTNEKLLKKARIHPFHILVALETYKKGHGNRGKLRWIPDTSIVEALDNAFYKSFKLVEPTGKRFLLAIDVSASMNQRVLGSILNASVVAAAMCMLVARTEKDSHMVAFSDEMLPCPITVNMLLHEVVEKMSDITMGSTDCALPMLWAQKTNTAADIFIVFTDCETNVEDVHPATALKQYREKMGIPAKLIVCAMTSNGFSIADPDDRGMLDICGFDSGALDVIRNFTLDLI.

A TROVE domain is found at 16–369; that stretch reads VPNSEGCYVW…SFKLVEPTGK (354 aa). The interval 120–284 is RNA-binding; the sequence is RIPTHLFTFI…DMPLTALLRN (165 aa). The VWFA-like domain stretch occupies residues 361–538; it reads FKLVEPTGKR…VIRNFTLDLI (178 aa). Ser-378, Ser-380, and Thr-445 together coordinate a divalent metal cation.

It belongs to the Ro 60 kDa family.

It is found in the cytoplasm. Its function is as follows. RNA-binding protein that binds to misfolded non-coding RNAs, pre-5S rRNA, and several small cytoplasmic RNA molecules known as Y RNAs. May play roles in cilia formation and/or maintenance. This chain is RNA-binding protein RO60, found in Xenopus laevis (African clawed frog).